The following is a 626-amino-acid chain: Chaperone protein DnaK (626 aa).

Thr-197 is modified (phosphothreonine; by autocatalysis). Over residues 595 to 614 (QNMAQQQQAQGGAQQQNQNK) the composition is skewed to low complexity. Residues 595 to 626 (QNMAQQQQAQGGAQQQNQNKGGDDDVIDAEVE) form a disordered region.

Belongs to the heat shock protein 70 family.

Acts as a chaperone. The polypeptide is Chaperone protein DnaK (Nautilia profundicola (strain ATCC BAA-1463 / DSM 18972 / AmH)).